The chain runs to 296 residues: Ribosomal RNA small subunit methyltransferase A (296 aa).

Residues asparagine 32, leucine 34, glycine 59, glutamate 80, aspartate 105, and asparagine 130 each coordinate S-adenosyl-L-methionine.

The protein belongs to the class I-like SAM-binding methyltransferase superfamily. rRNA adenine N(6)-methyltransferase family. RsmA subfamily.

The protein localises to the cytoplasm. The enzyme catalyses adenosine(1518)/adenosine(1519) in 16S rRNA + 4 S-adenosyl-L-methionine = N(6)-dimethyladenosine(1518)/N(6)-dimethyladenosine(1519) in 16S rRNA + 4 S-adenosyl-L-homocysteine + 4 H(+). In terms of biological role, specifically dimethylates two adjacent adenosines (A1518 and A1519) in the loop of a conserved hairpin near the 3'-end of 16S rRNA in the 30S particle. May play a critical role in biogenesis of 30S subunits. The sequence is that of Ribosomal RNA small subunit methyltransferase A from Levilactobacillus brevis (strain ATCC 367 / BCRC 12310 / CIP 105137 / JCM 1170 / LMG 11437 / NCIMB 947 / NCTC 947) (Lactobacillus brevis).